A 376-amino-acid chain; its full sequence is MASKDYYEVLGLSKGASDDEIKKAYRKLAMKYHPDRNQGNKEAEEKFKDINEAYQVLSDPQKKANYDQFGSADFNGGGFGGFGGGGFSGMGGFEDIFDSFFGGGFSSRRRNGPERGADLEYTVSLTFEEAVFGVEKEISITRNEKCDTCAGSGAKPGTDSKTCDKCGGTGQVRVQRNTPLGSFVSTSTCDKCGGSGKVIDEPCTTCHGKGTVRKNKKIKINIPAGVDTGNVLPLRGQGEPGKNGGPNGDLYINIRVSSHKNFERRGFDIYIKEHISFGKAVLGTEITVPTVDGSVKYKIPAGTQSGTTFRLKGKGVPRVNGHGRGNQYVKVIVDVPKAINEKQKAALIAFMEASGEKLGSDLGKETIVDKIKKSFK.

The 66-residue stretch at 5 to 70 (DYYEVLGLSK…QKKANYDQFG (66 aa)) folds into the J domain. Residues 133-215 (GVEKEISITR…CHGKGTVRKN (83 aa)) form a CR-type zinc finger. Residues C146, C149, C163, C166, C189, C192, C203, and C206 each coordinate Zn(2+). CXXCXGXG motif repeat units lie at residues 146-153 (CDTCAGSG), 163-170 (CDKCGGTG), 189-196 (CDKCGGSG), and 203-210 (CTTCHGKG).

Belongs to the DnaJ family. Homodimer. Requires Zn(2+) as cofactor.

Its subcellular location is the cytoplasm. Functionally, participates actively in the response to hyperosmotic and heat shock by preventing the aggregation of stress-denatured proteins and by disaggregating proteins, also in an autonomous, DnaK-independent fashion. Unfolded proteins bind initially to DnaJ; upon interaction with the DnaJ-bound protein, DnaK hydrolyzes its bound ATP, resulting in the formation of a stable complex. GrpE releases ADP from DnaK; ATP binding to DnaK triggers the release of the substrate protein, thus completing the reaction cycle. Several rounds of ATP-dependent interactions between DnaJ, DnaK and GrpE are required for fully efficient folding. Also involved, together with DnaK and GrpE, in the DNA replication of plasmids through activation of initiation proteins. This Clostridium novyi (strain NT) protein is Chaperone protein DnaJ.